The chain runs to 329 residues: Biotin synthase (329 aa).

The Radical SAM core domain occupies 48–278 (FLGTGVDLCS…DRKIAVCGGR (231 aa)). [4Fe-4S] cluster is bound by residues cysteine 66, cysteine 70, and cysteine 73. The [2Fe-2S] cluster site is built by serine 143 and cysteine 203.

It belongs to the radical SAM superfamily. Biotin synthase family. Homodimer. It depends on [4Fe-4S] cluster as a cofactor. [2Fe-2S] cluster is required as a cofactor.

The catalysed reaction is (4R,5S)-dethiobiotin + (sulfur carrier)-SH + 2 reduced [2Fe-2S]-[ferredoxin] + 2 S-adenosyl-L-methionine = (sulfur carrier)-H + biotin + 2 5'-deoxyadenosine + 2 L-methionine + 2 oxidized [2Fe-2S]-[ferredoxin]. It participates in cofactor biosynthesis; biotin biosynthesis; biotin from 7,8-diaminononanoate: step 2/2. Catalyzes the conversion of dethiobiotin (DTB) to biotin by the insertion of a sulfur atom into dethiobiotin via a radical-based mechanism. This Geobacter sulfurreducens (strain ATCC 51573 / DSM 12127 / PCA) protein is Biotin synthase.